Reading from the N-terminus, the 539-residue chain is uncharacterized protein (539 aa).

6 to 20 contributes to the FAD binding site; the sequence is LIIGGGGAAARAAIE. Active-site residues include H227 and R243.

It belongs to the FAD-dependent oxidoreductase 2 family. FRD/SDH subfamily. The cofactor is FAD.

This is an uncharacterized protein from Methanocaldococcus jannaschii (strain ATCC 43067 / DSM 2661 / JAL-1 / JCM 10045 / NBRC 100440) (Methanococcus jannaschii).